Consider the following 999-residue polypeptide: MEAAHLLPAADVLRHFSVTAEGGLSPAQVTGARERYGPNELPSEEGKSLWELVLEQFEDLLVRILLLAALVSFVLAWFEEGEETTTAFVEPLVIMLILVANAIVGVWQERNAESAIEALKEYEPEMGKVIRSDRKGVQRIRARDIVPGDIVEVAVGDKVPADLRLIEIKSTTLRVDQSILTGESVSVTKHTEAIPDPRAVNQDKKNMLFSGTNITSGKAVGVAVATGLHTELGKIRSQMAAVEPERTPLQRKLDEFGRQLSHAISVICVAVWVINIGHFADPAHGGSWLRGAVYYFKIAVALAVAAIPEGLPAVITTCLALGTRRMARKNAIVRSLPSVETLGCTSVICSDKTGTLTTNQMSVCRMFVVAEADAGSCLLHEFTISGTTYTPEGEVRQGDQPVRCGQFDGLVELATICALCNDSALDYNEAKGVYEKVGEATETALTCLVEKMNVFDTDLQALSRVERAGACNTVIKQLMRKEFTLEFSRDRKSMSVYCTPTRPHPTGQGSKMFVKGAPESVIERCSSVRVGSRTAPLTPTSREQILAKIRDWGSGSDTLRCLALATRDAPPRKEDMELDDCSKFVQYETDLTFVGCVGMLDPPRPEVAACITRCYQAGIRVVMITGDNKGTAVAICRRLGIFGDTEDVAGKAYTGREFDDLSPEQQRQACRTARCFARVEPAHKSRIVENLQSFNEITAMTGDGVNDAPALKKAEIGIAMGSGTAVAKSAAEMVLSDDNFASIVAAVEEGRAIYSNMKQFIRYLISSNVGEVVCIFLTAILGLPEALIPVQLLWVNLVTDGLPATALGFNPPDLDIMEKLPRSPREALISGWLFFRYLAIGVYVGLATVAAATWWFVYDAEGPHINFYQLRNFLKCSEDNPLFAGIDCEVFESRFPTTMALSVLVTIEMCNALNSVSENQSLLRMPPWMNPWLLVAVAMSMALHFLILLVPPLPLIFQVTPLSGRQWVVVLQISLPVILLDEALKYLSRNHMHEEMSQK.

Position 1 is an N-acetylmethionine (Met-1). The Cytoplasmic portion of the chain corresponds to 1–48 (MEAAHLLPAADVLRHFSVTAEGGLSPAQVTGARERYGPNELPSEEGKS). Ser-17 is subject to Phosphoserine. Thr-19 is modified (phosphothreonine). Ser-25 carries the phosphoserine modification. A helical transmembrane segment spans residues 49 to 69 (LWELVLEQFEDLLVRILLLAA). Residues 70–89 (LVSFVLAWFEEGEETTTAFV) are Lumenal-facing. The chain crosses the membrane as a helical span at residues 90-110 (EPLVIMLILVANAIVGVWQER). Residues 111-253 (NAESAIEALK…PERTPLQRKL (143 aa)) are Cytoplasmic-facing. A helical transmembrane segment spans residues 254-273 (DEFGRQLSHAISVICVAVWV). Residues 274–295 (INIGHFADPAHGGSWLRGAVYY) are Lumenal-facing. A helical membrane pass occupies residues 296 to 313 (FKIAVALAVAAIPEGLPA). Ca(2+)-binding residues include Val-304, Ala-305, Ile-307, and Glu-309. The Cytoplasmic portion of the chain corresponds to 314 to 757 (VITTCLALGT…EEGRAIYSNM (444 aa)). Asp-351 serves as the catalytic 4-aspartylphosphate intermediate. Mg(2+)-binding residues include Asp-351 and Thr-353. Thr-353 contributes to the ATP binding site. The interval 370-400 (AEADAGSCLLHEFTISGTTYTPEGEVRQGDQ) is interaction with phospholamban 1. Thr-415 is subject to Phosphothreonine. 7 residues coordinate ATP: Glu-442, Arg-489, Lys-515, Arg-560, Thr-625, Gly-626, and Asp-627. Position 662 is a phosphoserine (Ser-662). ATP-binding residues include Arg-678 and Lys-684. Asp-703 lines the Mg(2+) pocket. Asn-706 contributes to the ATP binding site. Residues 758-777 (KQFIRYLISSNVGEVVCIFL) form a helical membrane-spanning segment. Ca(2+)-binding residues include Asn-768 and Glu-771. Residues 778 to 787 (TAILGLPEAL) lie on the Lumenal side of the membrane. Residues 788–808 (IPVQLLWVNLVTDGLPATALG) traverse the membrane as a helical segment. The interaction with phospholamban 2 stretch occupies residues 788 to 808 (IPVQLLWVNLVTDGLPATALG). The Ca(2+) site is built by Asn-796, Thr-799, and Asp-800. Over 809–828 (FNPPDLDIMEKLPRSPREAL) the chain is Cytoplasmic. A helical membrane pass occupies residues 829-851 (ISGWLFFRYLAIGVYVGLATVAA). Residues 852–897 (ATWWFVYDAEGPHINFYQLRNFLKCSEDNPLFAGIDCEVFESRFPT) lie on the Lumenal side of the membrane. A helical transmembrane segment spans residues 898–917 (TMALSVLVTIEMCNALNSVS). Residue Glu-908 participates in Ca(2+) binding. At 918-930 (ENQSLLRMPPWMN) the chain is on the cytoplasmic side. The chain crosses the membrane as a helical span at residues 931–949 (PWLLVAVAMSMALHFLILL). Topologically, residues 950–964 (VPPLPLIFQVTPLSG) are lumenal. The helical transmembrane segment at 965–985 (RQWVVVLQISLPVILLDEALK) threads the bilayer. The Cytoplasmic portion of the chain corresponds to 986–999 (YLSRNHMHEEMSQK).

The protein belongs to the cation transport ATPase (P-type) (TC 3.A.3) family. Type IIA subfamily. As to quaternary structure, interacts with sarcolipin (SLN). Interacts with phospholamban (PLN). Interacts with myoregulin (MRLN). Interacts with DWORF. Interacts with VMP1. Interacts with TUNAR; the interaction occurs at low levels in low glucose conditions and is increased by high glucose levels. The cofactor is Mg(2+). In terms of tissue distribution, found in most tissues. Most abundant in thymus, trachea, salivary gland, spleen, bone marrow, lymph node, peripheral leukocytes, pancreas and colon. Also detected in fetal tissues. Expressed in cell lineages of hematopoietic, epithelial, or embryonic origin and also expressed in several cancer cell lines.

Its subcellular location is the nucleus membrane. It localises to the endoplasmic reticulum membrane. It is found in the sarcoplasmic reticulum membrane. It catalyses the reaction Ca(2+)(in) + ATP + H2O = Ca(2+)(out) + ADP + phosphate + H(+). Its activity is regulated as follows. Inhibited by sarcolipin (SLN), phospholamban (PLN) and myoregulin (MRLN). Enhanced by DWORF; DWORF increases activity by displacing sarcolipin (SLN), phospholamban (PLN) and myoregulin (MRLN). Functionally, this magnesium-dependent enzyme catalyzes the hydrolysis of ATP coupled with the transport of calcium. Transports calcium ions from the cytosol into the sarcoplasmic/endoplasmic reticulum lumen. Contributes to calcium sequestration involved in muscular excitation/contraction. This is Sarcoplasmic/endoplasmic reticulum calcium ATPase 3 from Homo sapiens (Human).